The primary structure comprises 407 residues: Serine hydroxymethyltransferase (407 aa).

Residues Tyr-51 and Gly-94–Ser-95 each bind pyridoxal 5'-phosphate. (6S)-5,6,7,8-tetrahydrofolate-binding positions include Leu-117 and Gly-121–Leu-123. Ser-172, His-200, and His-225 together coordinate pyridoxal 5'-phosphate. The residue at position 226 (Lys-226) is an N6-(pyridoxal phosphate)lysine. (6S)-5,6,7,8-tetrahydrofolate is bound at residue Glu-242. Gly-258 contributes to the pyridoxal 5'-phosphate binding site.

The protein belongs to the SHMT family. Homodimer. The cofactor is pyridoxal 5'-phosphate.

The protein localises to the cytoplasm. The enzyme catalyses (6R)-5,10-methylene-5,6,7,8-tetrahydrofolate + glycine + H2O = (6S)-5,6,7,8-tetrahydrofolate + L-serine. Its pathway is one-carbon metabolism; tetrahydrofolate interconversion. The protein operates within amino-acid biosynthesis; glycine biosynthesis; glycine from L-serine: step 1/1. In terms of biological role, catalyzes the reversible interconversion of serine and glycine with tetrahydrofolate (THF) serving as the one-carbon carrier. This reaction serves as the major source of one-carbon groups required for the biosynthesis of purines, thymidylate, methionine, and other important biomolecules. Also exhibits THF-independent aldolase activity toward beta-hydroxyamino acids, producing glycine and aldehydes, via a retro-aldol mechanism. This Thermus thermophilus (strain ATCC 27634 / DSM 579 / HB8) protein is Serine hydroxymethyltransferase.